The primary structure comprises 828 residues: Mediator of RNA polymerase II transcription subunit 16 (828 aa).

WD repeat units lie at residues 68-107, 199-241, 264-308, 622-663, and 777-816; these read GHQE…ANSW, RCRV…VSEK, DKFP…LPLN, NQGS…CLPV, and FPTE…TCLC.

It belongs to the Mediator complex subunit 16 family. Component of the Mediator complex.

Its subcellular location is the nucleus. Component of the Mediator complex, a coactivator involved in the regulated transcription of nearly all RNA polymerase II-dependent genes. Mediator functions as a bridge to convey information from gene-specific regulatory proteins to the basal RNA polymerase II transcription machinery. Mediator is recruited to promoters by direct interactions with regulatory proteins and serves as a scaffold for the assembly of a functional preinitiation complex with RNA polymerase II and the general transcription factors. The sequence is that of Mediator of RNA polymerase II transcription subunit 16 (med16) from Xenopus tropicalis (Western clawed frog).